The sequence spans 65 residues: Small, acid-soluble spore protein 2 (65 aa).

This sequence belongs to the alpha/beta-type SASP family.

Functionally, SASP are bound to spore DNA. They are double-stranded DNA-binding proteins that cause DNA to change to an a-like conformation. They protect the DNA backbone from chemical and enzymatic cleavage and are thus involved in dormant spore's high resistance to UV light. This Bacillus cereus protein is Small, acid-soluble spore protein 2 (sasP-2).